Reading from the N-terminus, the 77-residue chain is Acyl carrier protein (77 aa).

Residues 3-77 enclose the Carrier domain; sequence QEIFEKVKKI…GKAVEHIESK (75 aa). Residue S38 is modified to O-(pantetheine 4'-phosphoryl)serine.

It belongs to the acyl carrier protein (ACP) family. 4'-phosphopantetheine is transferred from CoA to a specific serine of apo-ACP by AcpS. This modification is essential for activity because fatty acids are bound in thioester linkage to the sulfhydryl of the prosthetic group.

The protein resides in the cytoplasm. The protein operates within lipid metabolism; fatty acid biosynthesis. Carrier of the growing fatty acid chain in fatty acid biosynthesis. This is Acyl carrier protein from Synechocystis sp. (strain ATCC 27184 / PCC 6803 / Kazusa).